Consider the following 167-residue polypeptide: Ubiquitin-conjugating enzyme E2 2 (167 aa).

One can recognise a UBC core domain in the interval 4–150 (PARRRLMRDF…VKETVEKSWE (147 aa)). Cys-88 acts as the Glycyl thioester intermediate in catalysis. Positions 148–167 (SWEDNMDDMDDSDEDDEDDE) are disordered. A compositionally biased stretch (acidic residues) spans 151-167 (DNMDDMDDSDEDDEDDE).

This sequence belongs to the ubiquitin-conjugating enzyme family.

It is found in the cytoplasm. It localises to the nucleus. It catalyses the reaction S-ubiquitinyl-[E1 ubiquitin-activating enzyme]-L-cysteine + [E2 ubiquitin-conjugating enzyme]-L-cysteine = [E1 ubiquitin-activating enzyme]-L-cysteine + S-ubiquitinyl-[E2 ubiquitin-conjugating enzyme]-L-cysteine.. The protein operates within protein modification; protein ubiquitination. Its function is as follows. Catalyzes the covalent attachment of ubiquitin to other proteins. Plays a role in transcription regulation by catalyzing the monoubiquitination of histone H2B to form H2BK123ub1. H2BK123ub1 gives a specific tag for epigenetic transcriptional activation and is also a prerequisite for H3K4me and H3K79me formation. Also involved in postreplication repair of UV-damaged DNA, in N-end rule-dependent protein degradation and in sporulation. The chain is Ubiquitin-conjugating enzyme E2 2 (UBC2) from Candida glabrata (strain ATCC 2001 / BCRC 20586 / JCM 3761 / NBRC 0622 / NRRL Y-65 / CBS 138) (Yeast).